The primary structure comprises 123 residues: uncharacterized protein (123 aa).

The helical transmembrane segment at 1 to 21 (MHIIAKSILLMAVSFLVIIFT) threads the bilayer.

It is found in the membrane. This is an uncharacterized protein from Methanocaldococcus jannaschii (strain ATCC 43067 / DSM 2661 / JAL-1 / JCM 10045 / NBRC 100440) (Methanococcus jannaschii).